The following is a 496-amino-acid chain: NADH-quinone oxidoreductase subunit N (496 aa).

The next 13 helical transmembrane spans lie at 16-36 (SLSPMLSMMVFALFILIVGAI), 46-66 (CVFCIIAIFVNLGITLDFNGL), 79-99 (ISIISQIIILIASALFIPLAL), 116-136 (FLFMIAGFLFMVSSNNLLIIF), 166-186 (FAMGSLSAGFFAMAIAMFYLA), 208-228 (LIILLGCVFIASAIGFKLSLI), 245-267 (LAGYMSIVPKVAGFIVALRIFAM), 278-298 (DMLYIIAVLTMSLANIMALVQ), 304-324 (MLAFSSIAHAGVVLCALVANS), 331-351 (LFFYWIMFLFANLGAFSMLWV), 382-402 (AVIMGIFMIALAGIPPFSVFW), 422-442 (IIMINSAIAIYYYLKLIVFMF), and 464-484 (VIVGVAVAGTVFAFLFSGAIL).

The protein belongs to the complex I subunit 2 family. NDH-1 is composed of 14 different subunits. Subunits NuoA, H, J, K, L, M, N constitute the membrane sector of the complex.

The protein localises to the cell inner membrane. It carries out the reaction a quinone + NADH + 5 H(+)(in) = a quinol + NAD(+) + 4 H(+)(out). NDH-1 shuttles electrons from NADH, via FMN and iron-sulfur (Fe-S) centers, to quinones in the respiratory chain. The immediate electron acceptor for the enzyme in this species is believed to be ubiquinone. Couples the redox reaction to proton translocation (for every two electrons transferred, four hydrogen ions are translocated across the cytoplasmic membrane), and thus conserves the redox energy in a proton gradient. In Campylobacter concisus (strain 13826), this protein is NADH-quinone oxidoreductase subunit N.